The primary structure comprises 507 residues: ATP synthase subunit alpha, chloroplastic (507 aa).

170-177 provides a ligand contact to ATP; the sequence is GDRQTGKT.

Belongs to the ATPase alpha/beta chains family. As to quaternary structure, F-type ATPases have 2 components, CF(1) - the catalytic core - and CF(0) - the membrane proton channel. CF(1) has five subunits: alpha(3), beta(3), gamma(1), delta(1), epsilon(1). CF(0) has four main subunits: a, b, b' and c.

It is found in the plastid. The protein localises to the chloroplast thylakoid membrane. It catalyses the reaction ATP + H2O + 4 H(+)(in) = ADP + phosphate + 5 H(+)(out). In terms of biological role, produces ATP from ADP in the presence of a proton gradient across the membrane. The alpha chain is a regulatory subunit. The polypeptide is ATP synthase subunit alpha, chloroplastic (Ceratophyllum demersum (Rigid hornwort)).